The chain runs to 302 residues: Glutaminase (302 aa).

Substrate-binding residues include S61, N111, E155, N162, Y186, Y238, and V256.

It belongs to the glutaminase family. As to quaternary structure, homotetramer.

The enzyme catalyses L-glutamine + H2O = L-glutamate + NH4(+). The protein is Glutaminase of Pseudomonas aeruginosa (strain ATCC 15692 / DSM 22644 / CIP 104116 / JCM 14847 / LMG 12228 / 1C / PRS 101 / PAO1).